The following is a 319-amino-acid chain: Probable NAD(P)H-dependent D-xylose reductase xyl1 (319 aa).

The active-site Proton donor is the Tyr50. His112 is a substrate binding site. NAD(+) contacts are provided by residues 166 to 167 (SN), 215 to 224 (SSFGPLSFLE), and 271 to 281 (KSNNPTRLSQN).

The protein belongs to the aldo/keto reductase family.

It catalyses the reaction xylitol + NAD(+) = D-xylose + NADH + H(+). The enzyme catalyses xylitol + NADP(+) = D-xylose + NADPH + H(+). It participates in carbohydrate metabolism; D-xylose degradation. Its function is as follows. Catalyzes the initial reaction in the xylose utilization pathway by reducing D-xylose into xylitol. Xylose is a major component of hemicelluloses such as xylan. Most fungi utilize D-xylose via three enzymatic reactions, xylose reductase (XR), xylitol dehydrogenase (XDH), and xylulokinase, to form xylulose 5-phosphate, which enters pentose phosphate pathway. The chain is Probable NAD(P)H-dependent D-xylose reductase xyl1 (xyl1) from Aspergillus oryzae (strain ATCC 42149 / RIB 40) (Yellow koji mold).